The following is a 246-amino-acid chain: tRNA (guanine-N(1)-)-methyltransferase (246 aa).

S-adenosyl-L-methionine is bound by residues Gly117 and 137 to 142 (IGDYVL).

It belongs to the RNA methyltransferase TrmD family. In terms of assembly, homodimer.

Its subcellular location is the cytoplasm. The enzyme catalyses guanosine(37) in tRNA + S-adenosyl-L-methionine = N(1)-methylguanosine(37) in tRNA + S-adenosyl-L-homocysteine + H(+). In terms of biological role, specifically methylates guanosine-37 in various tRNAs. The polypeptide is tRNA (guanine-N(1)-)-methyltransferase (Acinetobacter baumannii (strain SDF)).